A 37-amino-acid polypeptide reads, in one-letter code: Cytochrome b6-f complex subunit 5 (37 aa).

A helical transmembrane segment spans residues 5 to 25; the sequence is LLSGIVLGLIPITLAGLFVTA.

It belongs to the PetG family. In terms of assembly, the 4 large subunits of the cytochrome b6-f complex are cytochrome b6, subunit IV (17 kDa polypeptide, PetD), cytochrome f and the Rieske protein, while the 4 small subunits are PetG, PetL, PetM and PetN. The complex functions as a dimer.

It localises to the plastid. The protein localises to the chloroplast thylakoid membrane. Functionally, component of the cytochrome b6-f complex, which mediates electron transfer between photosystem II (PSII) and photosystem I (PSI), cyclic electron flow around PSI, and state transitions. PetG is required for either the stability or assembly of the cytochrome b6-f complex. This Angiopteris evecta (Mule's foot fern) protein is Cytochrome b6-f complex subunit 5.